Reading from the N-terminus, the 287-residue chain is 4-hydroxybenzoate octaprenyltransferase (287 aa).

6 consecutive transmembrane segments (helical) span residues 41–61 (WPLIVIFALGTLLMRSAGCAM), 89–109 (WEAVAIAVGLSFVAFLLILPL), 133–153 (FFAIPQAYLGIAFGFGIPMAF), 158–178 (NTVPPLAWVMLIANVFWSIAY), 218–238 (LGIYVWIGIALGFGAAYWVGW), and 267–287 (NNWLGGVLFAGIAAHYLMAGS).

The protein belongs to the UbiA prenyltransferase family. Mg(2+) is required as a cofactor.

It is found in the cell inner membrane. The enzyme catalyses all-trans-octaprenyl diphosphate + 4-hydroxybenzoate = 4-hydroxy-3-(all-trans-octaprenyl)benzoate + diphosphate. Its pathway is cofactor biosynthesis; ubiquinone biosynthesis. Its function is as follows. Catalyzes the prenylation of para-hydroxybenzoate (PHB) with an all-trans polyprenyl group. Mediates the second step in the final reaction sequence of ubiquinone-8 (UQ-8) biosynthesis, which is the condensation of the polyisoprenoid side chain with PHB, generating the first membrane-bound Q intermediate 3-octaprenyl-4-hydroxybenzoate. This Burkholderia multivorans (strain ATCC 17616 / 249) protein is 4-hydroxybenzoate octaprenyltransferase.